Here is a 190-residue protein sequence, read N- to C-terminus: UPF0340 protein BT9727_4999 (190 aa).

The protein belongs to the UPF0340 family.

This is UPF0340 protein BT9727_4999 from Bacillus thuringiensis subsp. konkukian (strain 97-27).